We begin with the raw amino-acid sequence, 510 residues long: ATP synthase subunit alpha, chloroplastic (510 aa).

ATP is bound at residue 170 to 177 (GDRQTGKT).

The protein belongs to the ATPase alpha/beta chains family. F-type ATPases have 2 components, CF(1) - the catalytic core - and CF(0) - the membrane proton channel. CF(1) has five subunits: alpha(3), beta(3), gamma(1), delta(1), epsilon(1). CF(0) has four main subunits: a, b, b' and c.

Its subcellular location is the plastid. It is found in the chloroplast thylakoid membrane. The catalysed reaction is ATP + H2O + 4 H(+)(in) = ADP + phosphate + 5 H(+)(out). Functionally, produces ATP from ADP in the presence of a proton gradient across the membrane. The alpha chain is a regulatory subunit. In Phaseolus vulgaris (Kidney bean), this protein is ATP synthase subunit alpha, chloroplastic.